The following is a 477-amino-acid chain: Ribulose bisphosphate carboxylase large chain (477 aa).

Residues 1–2 (MS) constitute a propeptide that is removed on maturation. Pro-3 carries the post-translational modification N-acetylproline. Residue Lys-14 is modified to N6,N6,N6-trimethyllysine. 2 residues coordinate substrate: Asn-123 and Thr-173. Residue Lys-175 is the Proton acceptor of the active site. Position 177 (Lys-177) interacts with substrate. Mg(2+) contacts are provided by Lys-201, Asp-203, and Glu-204. Residue Lys-201 is modified to N6-carboxylysine. The active-site Proton acceptor is the His-294. Residues Arg-295, His-327, and Ser-379 each coordinate substrate.

Belongs to the RuBisCO large chain family. Type I subfamily. As to quaternary structure, heterohexadecamer of 8 large chains and 8 small chains; disulfide-linked. The disulfide link is formed within the large subunit homodimers. Mg(2+) serves as cofactor. The disulfide bond which can form in the large chain dimeric partners within the hexadecamer appears to be associated with oxidative stress and protein turnover.

The protein resides in the plastid. It localises to the chloroplast. It catalyses the reaction 2 (2R)-3-phosphoglycerate + 2 H(+) = D-ribulose 1,5-bisphosphate + CO2 + H2O. The catalysed reaction is D-ribulose 1,5-bisphosphate + O2 = 2-phosphoglycolate + (2R)-3-phosphoglycerate + 2 H(+). Its function is as follows. RuBisCO catalyzes two reactions: the carboxylation of D-ribulose 1,5-bisphosphate, the primary event in carbon dioxide fixation, as well as the oxidative fragmentation of the pentose substrate in the photorespiration process. Both reactions occur simultaneously and in competition at the same active site. The polypeptide is Ribulose bisphosphate carboxylase large chain (Nicotiana debneyi (Debney's tobacco)).